We begin with the raw amino-acid sequence, 257 residues long: Glutamate racemase (257 aa).

Substrate-binding positions include 12 to 13 (DS) and 44 to 45 (YG). The active-site Proton donor/acceptor is Cys75. 76–77 (NT) provides a ligand contact to substrate. The active-site Proton donor/acceptor is Cys185. Residue 186–187 (TH) participates in substrate binding.

The protein belongs to the aspartate/glutamate racemases family.

It catalyses the reaction L-glutamate = D-glutamate. It functions in the pathway cell wall biogenesis; peptidoglycan biosynthesis. In terms of biological role, provides the (R)-glutamate required for cell wall biosynthesis. The sequence is that of Glutamate racemase from Clostridium botulinum (strain ATCC 19397 / Type A).